A 658-amino-acid polypeptide reads, in one-letter code: uncharacterized protein (658 aa).

Over residues 516 to 639 the composition is skewed to low complexity; the sequence is SSNNSNSSNN…NNNNNSSQGG (124 aa). The disordered stretch occupies residues 516-646; that stretch reads SSNNSNSSNN…QGGNSQGGSG (131 aa).

It localises to the cytoplasm. This is an uncharacterized protein from Schizosaccharomyces pombe (strain 972 / ATCC 24843) (Fission yeast).